A 127-amino-acid chain; its full sequence is Phosphoribosyl-AMP cyclohydrolase (127 aa).

Residue aspartate 83 coordinates Mg(2+). Cysteine 84 is a Zn(2+) binding site. Aspartate 85 and aspartate 87 together coordinate Mg(2+). Residues cysteine 100 and cysteine 107 each contribute to the Zn(2+) site.

The protein belongs to the PRA-CH family. As to quaternary structure, homodimer. The cofactor is Mg(2+). It depends on Zn(2+) as a cofactor.

The protein resides in the cytoplasm. The enzyme catalyses 1-(5-phospho-beta-D-ribosyl)-5'-AMP + H2O = 1-(5-phospho-beta-D-ribosyl)-5-[(5-phospho-beta-D-ribosylamino)methylideneamino]imidazole-4-carboxamide. Its pathway is amino-acid biosynthesis; L-histidine biosynthesis; L-histidine from 5-phospho-alpha-D-ribose 1-diphosphate: step 3/9. Functionally, catalyzes the hydrolysis of the adenine ring of phosphoribosyl-AMP. This is Phosphoribosyl-AMP cyclohydrolase from Methanocaldococcus jannaschii (strain ATCC 43067 / DSM 2661 / JAL-1 / JCM 10045 / NBRC 100440) (Methanococcus jannaschii).